The chain runs to 287 residues: CTD small phosphatase-like protein 3 (287 aa).

The 160-residue stretch at Arg60–Ile219 folds into the FCP1 homology domain.

The protein belongs to the CTDSPL2 family.

Probable phosphatase. The chain is CTD small phosphatase-like protein 3 (scpl-3) from Caenorhabditis elegans.